The primary structure comprises 240 residues: tRNA (guanine-N(1)-)-methyltransferase (240 aa).

Residues glycine 110 and leucine 129–leucine 134 each bind S-adenosyl-L-methionine.

Belongs to the RNA methyltransferase TrmD family. Homodimer.

It is found in the cytoplasm. It catalyses the reaction guanosine(37) in tRNA + S-adenosyl-L-methionine = N(1)-methylguanosine(37) in tRNA + S-adenosyl-L-homocysteine + H(+). Functionally, specifically methylates guanosine-37 in various tRNAs. In Clostridium botulinum (strain ATCC 19397 / Type A), this protein is tRNA (guanine-N(1)-)-methyltransferase.